Reading from the N-terminus, the 415-residue chain is Methylthioribose-1-phosphate isomerase (415 aa).

Aspartate 284 functions as the Proton donor in the catalytic mechanism.

This sequence belongs to the eIF-2B alpha/beta/delta subunits family. MtnA subfamily.

It is found in the cytoplasm. Its subcellular location is the nucleus. The enzyme catalyses 5-(methylsulfanyl)-alpha-D-ribose 1-phosphate = 5-(methylsulfanyl)-D-ribulose 1-phosphate. Its pathway is amino-acid biosynthesis; L-methionine biosynthesis via salvage pathway; L-methionine from S-methyl-5-thio-alpha-D-ribose 1-phosphate: step 1/6. Its function is as follows. Catalyzes the interconversion of methylthioribose-1-phosphate (MTR-1-P) into methylthioribulose-1-phosphate (MTRu-1-P). The sequence is that of Methylthioribose-1-phosphate isomerase from Vanderwaltozyma polyspora (strain ATCC 22028 / DSM 70294 / BCRC 21397 / CBS 2163 / NBRC 10782 / NRRL Y-8283 / UCD 57-17) (Kluyveromyces polysporus).